Reading from the N-terminus, the 128-residue chain is UPF0102 protein RPB_0420 (128 aa).

The protein belongs to the UPF0102 family.

The protein is UPF0102 protein RPB_0420 of Rhodopseudomonas palustris (strain HaA2).